Reading from the N-terminus, the 397-residue chain is Phosphoglycerate kinase (397 aa).

Substrate-binding positions include 21 to 23, Arg36, 59 to 62, Arg118, and Arg151; these read DFN and HCGR. Residues Lys201, Glu323, and 353–356 each bind ATP; that span reads GGDT.

This sequence belongs to the phosphoglycerate kinase family. In terms of assembly, monomer.

It localises to the cytoplasm. The enzyme catalyses (2R)-3-phosphoglycerate + ATP = (2R)-3-phospho-glyceroyl phosphate + ADP. Its pathway is carbohydrate degradation; glycolysis; pyruvate from D-glyceraldehyde 3-phosphate: step 2/5. The polypeptide is Phosphoglycerate kinase (Bartonella henselae (strain ATCC 49882 / DSM 28221 / CCUG 30454 / Houston 1) (Rochalimaea henselae)).